The sequence spans 61 residues: Large ribosomal subunit protein bL32 (61 aa).

Positions 1–10 are enriched in basic residues; that stretch reads MAQPKKKTSN. The tract at residues 1–23 is disordered; that stretch reads MAQPKKKTSNAKRDQRRATWKRK.

The protein belongs to the bacterial ribosomal protein bL32 family.

The protein is Large ribosomal subunit protein bL32 of Gloeobacter violaceus (strain ATCC 29082 / PCC 7421).